Here is an 83-residue protein sequence, read N- to C-terminus: Sulfur carrier protein TusA (83 aa).

Cys19 functions as the Cysteine persulfide intermediate in the catalytic mechanism.

Belongs to the sulfur carrier protein TusA family.

The protein resides in the cytoplasm. Its function is as follows. Sulfur carrier protein which probably makes part of a sulfur-relay system. This chain is Sulfur carrier protein TusA, found in Aliivibrio fischeri (strain ATCC 700601 / ES114) (Vibrio fischeri).